The sequence spans 100 residues: MAEEHNHNHEEENIIWITNEEGKEEAYEILFDFDSKDFDKSYVLYFPAGKGEDEEIEILASSYIQDEEGKQGQLKPVETDEEWDMIEEILATFLADEDEE.

The protein belongs to the UPF0473 family.

In Listeria monocytogenes serotype 4a (strain HCC23), this protein is UPF0473 protein LMHCC_1068.